We begin with the raw amino-acid sequence, 526 residues long: Glucose-6-phosphate 1-dehydrogenase (526 aa).

NADP(+) contacts are provided by residues G50–K57, R84, and K184. D-glucose 6-phosphate is bound by residues K184, H214–K218, E252, and D271. Residue H276 is the Proton acceptor of the active site. Position 370 (R370) interacts with NADP(+). D-glucose 6-phosphate contacts are provided by K373 and R378. Residues K379, R383, and R406 each coordinate NADP(+). Q408 provides a ligand contact to D-glucose 6-phosphate. Residues Y414 to K416, D434 to T436, R500, Y516, and W522 each bind NADP(+).

It belongs to the glucose-6-phosphate dehydrogenase family.

It localises to the cytoplasm. Its subcellular location is the cytosol. The catalysed reaction is D-glucose 6-phosphate + NADP(+) = 6-phospho-D-glucono-1,5-lactone + NADPH + H(+). It participates in carbohydrate degradation; pentose phosphate pathway; D-ribulose 5-phosphate from D-glucose 6-phosphate (oxidative stage): step 1/3. Cytosolic glucose-6-phosphate dehydrogenase that catalyzes the first and rate-limiting step of the oxidative branch within the pentose phosphate pathway/shunt, an alternative route to glycolysis for the dissimilation of carbohydrates and a major source of reducing power and metabolic intermediates for fatty acid and nucleic acid biosynthetic processes. The polypeptide is Glucose-6-phosphate 1-dehydrogenase (ZW) (Ceratitis capitata (Mediterranean fruit fly)).